We begin with the raw amino-acid sequence, 177 residues long: Large ribosomal subunit protein uL6 (177 aa).

It belongs to the universal ribosomal protein uL6 family. In terms of assembly, part of the 50S ribosomal subunit.

Its function is as follows. This protein binds to the 23S rRNA, and is important in its secondary structure. It is located near the subunit interface in the base of the L7/L12 stalk, and near the tRNA binding site of the peptidyltransferase center. In Acidovorax ebreus (strain TPSY) (Diaphorobacter sp. (strain TPSY)), this protein is Large ribosomal subunit protein uL6.